The primary structure comprises 1247 residues: SAM and SH3 domain-containing protein 1 (1247 aa).

The segment at 1 to 39 (MEDAGAAGPGPEPEPEPEPEPEPAPEPEPEPKPGAGTSE) is disordered. Positions 13 to 28 (PEPEPEPEPEPAPEPE) are enriched in acidic residues. Position 90 is a phosphoserine (S90). 3 disordered regions span residues 126 to 145 (VERKNPLHKSNSEDSSVGKG), 221 to 257 (AALDPADWPDGSYPTFDGSSNCNSREQSDDETEESVK), and 316 to 344 (FFDGSPEKPPEDDSDSLTTSPSSSSLDTW). S248 carries the post-translational modification Phosphoserine. A compositionally biased stretch (low complexity) spans 331–343 (SLTTSPSSSSLDT). S407 carries the post-translational modification Phosphoserine. A disordered region spans residues 449–573 (SLGKKVKSVK…DFTPSPYDTD (125 aa)). Low complexity-rich tracts occupy residues 468–484 (KYSSSVSEQDSGLDGMP) and 505–523 (GGSVESLRSSLSGQSSMSG). The span at 524-536 (QTVSTTDSSTSNR) shows a compositional bias: polar residues. One can recognise an SH3 domain in the interval 554 to 615 (PFCGRARVHT…KFIYVDVLSE (62 aa)). At S614 the chain carries Phosphoserine. Disordered stretches follow at residues 616–639 (DEEKPKRPTRRRRKGRPPQPKSVE) and 713–810 (DSQG…LNKN). Over residues 622 to 631 (RPTRRRRKGR) the composition is skewed to basic residues. In terms of domain architecture, SAM 1 spans 633–697 (PQPKSVEDLL…LTAVELLQEY (65 aa)). Residues 746–765 (SAKSSTEPSLKSFSRNQLGN) show a composition bias toward polar residues. Phosphoserine is present on residues S821 and S839. Disordered regions lie at residues 846–884 (EPGAEQDVPTEVTEPPPQIVPEVPQKTTASSTKAQPLEQ), 903–946 (PQKL…LART), and 971–1065 (DAEQ…SELP). A required for interaction with TRAF6 region spans residues 852 to 860 (DVPTEVTEP). T858 carries the phosphothreonine modification. Positions 1050 to 1060 (GSPPSTRPPPW) are enriched in pro residues. Residues 1177–1241 (GCISSVSDWL…LSAARLFKLP (65 aa)) form the SAM 2 domain.

As to quaternary structure, interacts with GNAS. Interacts with IQGAP1. Interacts with TRAF6 (via C-terminus); the interaction is LPS-dependent. Interacts with MAP3K7, CHUK and IKBKB. Expressed ubiquitously, with highest levels in lung, placenta, spleen and thymus. Down-regulated in the majority (74%) of breast tumors in comparison with corresponding normal breast epithelial tissues. Expressed in the epidermis, epidermal keratinocytes, dermal fibroblasts and melanocytes.

The protein localises to the cytoplasm. Its function is as follows. Is a positive regulator of NF-kappa-B signaling downstream of TLR4 activation. It acts as a scaffold molecule to assemble a molecular complex that includes TRAF6, MAP3K7, CHUK and IKBKB, thereby facilitating NF-kappa-B signaling activation. Regulates TRAF6 and MAP3K7 ubiquitination. Involved in the regulation of cell mobility. Regulates lipolysaccharide (LPS)-induced endothelial cell migration. Is involved in the regulation of skin pigmentation through the control of melanocyte migration in the epidermis. This chain is SAM and SH3 domain-containing protein 1 (SASH1), found in Homo sapiens (Human).